We begin with the raw amino-acid sequence, 390 residues long: O-phospho-L-seryl-tRNA:Cys-tRNA synthase 2 (390 aa).

Pyridoxal 5'-phosphate-binding positions include 83–84 (AR), Asn-187, and 210–212 (SGH). An N6-(pyridoxal phosphate)lysine modification is found at Lys-213.

The protein belongs to the SepCysS family. In terms of assembly, homodimer. Interacts with SepRS. Pyridoxal 5'-phosphate is required as a cofactor.

It catalyses the reaction O-phospho-L-seryl-tRNA(Cys) + hydrogen sulfide + H(+) = L-cysteinyl-tRNA(Cys) + phosphate. Converts O-phospho-L-seryl-tRNA(Cys) (Sep-tRNA(Cys)) to L-cysteinyl-tRNA(Cys) (Cys-tRNA(Cys)). The protein is O-phospho-L-seryl-tRNA:Cys-tRNA synthase 2 of Archaeoglobus fulgidus (strain ATCC 49558 / DSM 4304 / JCM 9628 / NBRC 100126 / VC-16).